The following is a 409-amino-acid chain: D-galactonate dehydratase family member Achl_0790 (409 aa).

Residue aspartate 217 participates in Mg(2+) binding. Histidine 219 provides a ligand contact to D-arabinonate. Positions 243 and 269 each coordinate Mg(2+). Positions 269, 290, 319, and 346 each coordinate D-arabinonate.

The protein belongs to the mandelate racemase/muconate lactonizing enzyme family. GalD subfamily.

Its function is as follows. Has no detectable activity with D-mannonate and with a panel of 70 other acid sugars (in vitro), in spite of the conservation of the residues that are expected to be important for catalytic activity and cofactor binding. May have evolved a divergent function. The polypeptide is D-galactonate dehydratase family member Achl_0790 (Pseudarthrobacter chlorophenolicus (strain ATCC 700700 / DSM 12829 / CIP 107037 / JCM 12360 / KCTC 9906 / NCIMB 13794 / A6) (Arthrobacter chlorophenolicus)).